The following is a 338-amino-acid chain: Ketol-acid reductoisomerase (NADP(+)) (338 aa).

A KARI N-terminal Rossmann domain is found at 1–181; that stretch reads MKIYYDKDCN…GGGRAGIIET (181 aa). Residues 24-27, Lys47, Ser50, Ser52, and 82-85 each bind NADP(+); these read YGSQ and DEIQ. His107 is a catalytic residue. Residue Gly133 coordinates NADP(+). The KARI C-terminal knotted domain maps to 182–327; it reads SFKEETETDL…ARLRSMMSWI (146 aa). Asp190, Glu194, Glu226, and Glu230 together coordinate Mg(2+). Ser251 is a binding site for substrate.

It belongs to the ketol-acid reductoisomerase family. Requires Mg(2+) as cofactor.

The catalysed reaction is (2R)-2,3-dihydroxy-3-methylbutanoate + NADP(+) = (2S)-2-acetolactate + NADPH + H(+). It carries out the reaction (2R,3R)-2,3-dihydroxy-3-methylpentanoate + NADP(+) = (S)-2-ethyl-2-hydroxy-3-oxobutanoate + NADPH + H(+). Its pathway is amino-acid biosynthesis; L-isoleucine biosynthesis; L-isoleucine from 2-oxobutanoate: step 2/4. It participates in amino-acid biosynthesis; L-valine biosynthesis; L-valine from pyruvate: step 2/4. In terms of biological role, involved in the biosynthesis of branched-chain amino acids (BCAA). Catalyzes an alkyl-migration followed by a ketol-acid reduction of (S)-2-acetolactate (S2AL) to yield (R)-2,3-dihydroxy-isovalerate. In the isomerase reaction, S2AL is rearranged via a Mg-dependent methyl migration to produce 3-hydroxy-3-methyl-2-ketobutyrate (HMKB). In the reductase reaction, this 2-ketoacid undergoes a metal-dependent reduction by NADPH to yield (R)-2,3-dihydroxy-isovalerate. This chain is Ketol-acid reductoisomerase (NADP(+)), found in Geobacter sulfurreducens (strain ATCC 51573 / DSM 12127 / PCA).